Here is a 248-residue protein sequence, read N- to C-terminus: MYQWNLPYRKDDVETGVSSRRPLLYPAMHENPELRWGFIRKVYSIIAFQLLATVAVAATVVTVRPIALFFATTGLGLALYIVIIITPLIVLCPLYYYHQKHPVNYLLLGIFTLALAFVVGLTCAFTNGKVILESVILTSVVVLSLTLYTFWAARKGYDFNFLGPFLFGALTVLIFFALIQILFPLGRVSVMIYGCLVSIIFCGYIVYDTDNLIKRHTYDEYIWAAVSLYLDIINLFLYLLTVLRALQR.

The next 7 membrane-spanning stretches (helical) occupy residues 42-62 (VYSI…TVVT), 74-94 (GLGL…LCPL), 105-125 (YLLL…TCAF), 130-150 (VILE…LYTF), 165-185 (FLFG…LFPL), 188-208 (VSVM…IVYD), and 222-242 (IWAA…LLTV).

The protein belongs to the BI1 family.

The protein localises to the membrane. The polypeptide is Protein LIFEGUARD 3 (Arabidopsis thaliana (Mouse-ear cress)).